A 151-amino-acid chain; its full sequence is UPF0178 protein PMI1258 (151 aa).

The protein belongs to the UPF0178 family.

In Proteus mirabilis (strain HI4320), this protein is UPF0178 protein PMI1258.